The primary structure comprises 176 residues: Ribonuclease mitogillin (176 aa).

A signal peptide spans 1–27 (MVAIKNLFLLAATAVSVLAAPSPLDAR). 2 disulfides stabilise this stretch: Cys-32/Cys-174 and Cys-102/Cys-158. His-76 is a catalytic residue. Residue Glu-122 is the Proton acceptor of the active site. Residue His-163 is the Proton donor of the active site.

The protein belongs to the ribonuclease U2 family.

It localises to the secreted. This purine-specific ribonuclease cleaves 28S RNA in eukaryotic ribosomes, inhibits protein synthesis, and shows antitumor activity. The polypeptide is Ribonuclease mitogillin (mitF) (Aspergillus fumigatus (strain ATCC MYA-4609 / CBS 101355 / FGSC A1100 / Af293) (Neosartorya fumigata)).